Reading from the N-terminus, the 580-residue chain is Potassium-transporting ATPase potassium-binding subunit (580 aa).

A run of 10 helical transmembrane segments spans residues 3–23, 65–85, 136–156, 179–199, 263–283, 293–313, 399–419, 436–456, 504–524, and 546–566; these read ASGA…SVPL, DYAF…YALQ, GLGV…VALI, LYIL…QGVV, LSNF…CHTF, GWAV…ACVA, GLYG…LMVG, MASL…AIAV, AIGV…LALA, and LFVG…FVPA.

It belongs to the KdpA family. The system is composed of three essential subunits: KdpA, KdpB and KdpC.

Its subcellular location is the cell inner membrane. Part of the high-affinity ATP-driven potassium transport (or Kdp) system, which catalyzes the hydrolysis of ATP coupled with the electrogenic transport of potassium into the cytoplasm. This subunit binds the periplasmic potassium ions and delivers the ions to the membrane domain of KdpB through an intramembrane tunnel. The chain is Potassium-transporting ATPase potassium-binding subunit from Sorangium cellulosum (strain So ce56) (Polyangium cellulosum (strain So ce56)).